The primary structure comprises 131 residues: Large ribosomal subunit protein bL17 (131 aa).

It belongs to the bacterial ribosomal protein bL17 family. As to quaternary structure, part of the 50S ribosomal subunit. Contacts protein L32.

The polypeptide is Large ribosomal subunit protein bL17 (Methylibium petroleiphilum (strain ATCC BAA-1232 / LMG 22953 / PM1)).